A 20-amino-acid polypeptide reads, in one-letter code: Pregnancy-associated glycoprotein 60H (20 aa).

N4 carries N-linked (GlcNAc...) asparagine glycosylation.

Belongs to the peptidase A1 family. As to expression, chorionic epithelium (trophectoderm) and placental cotyledons.

The protein localises to the secreted. It is found in the extracellular space. In Bison bonasus (European bison), this protein is Pregnancy-associated glycoprotein 60H.